The primary structure comprises 118 residues: Small ribosomal subunit protein uS13 (118 aa).

The interval 94 to 118 (GLPVRGQRTQTNARTRKGPRRLARK) is disordered. A compositionally biased stretch (basic residues) spans 107–118 (RTRKGPRRLARK).

Belongs to the universal ribosomal protein uS13 family. As to quaternary structure, part of the 30S ribosomal subunit. Forms a loose heterodimer with protein S19. Forms two bridges to the 50S subunit in the 70S ribosome.

Its function is as follows. Located at the top of the head of the 30S subunit, it contacts several helices of the 16S rRNA. In the 70S ribosome it contacts the 23S rRNA (bridge B1a) and protein L5 of the 50S subunit (bridge B1b), connecting the 2 subunits; these bridges are implicated in subunit movement. Contacts the tRNAs in the A and P-sites. This Nitrosococcus oceani (strain ATCC 19707 / BCRC 17464 / JCM 30415 / NCIMB 11848 / C-107) protein is Small ribosomal subunit protein uS13.